The following is a 356-amino-acid chain: S-adenosylmethionine:tRNA ribosyltransferase-isomerase (356 aa).

This sequence belongs to the QueA family. Monomer.

The protein resides in the cytoplasm. It catalyses the reaction 7-aminomethyl-7-carbaguanosine(34) in tRNA + S-adenosyl-L-methionine = epoxyqueuosine(34) in tRNA + adenine + L-methionine + 2 H(+). It functions in the pathway tRNA modification; tRNA-queuosine biosynthesis. In terms of biological role, transfers and isomerizes the ribose moiety from AdoMet to the 7-aminomethyl group of 7-deazaguanine (preQ1-tRNA) to give epoxyqueuosine (oQ-tRNA). The chain is S-adenosylmethionine:tRNA ribosyltransferase-isomerase from Escherichia coli O1:K1 / APEC.